A 1735-amino-acid polypeptide reads, in one-letter code: Glutamine and serine-rich protein 1 (1735 aa).

At Met-1 the chain carries N-acetylmethionine. The span at 267 to 297 shows a compositional bias: polar residues; it reads AIPSSGYPPSTTKIKSCSTEQPLTSTKTPKP. Disordered stretches follow at residues 267 to 301, 414 to 440, 479 to 518, and 533 to 561; these read AIPSSGYPPSTTKIKSCSTEQPLTSTKTPKPQSII, TRDLSSVSQSQSYSSGHSQGLSPVSQT, SRAQNLPDSSPTQNYISMHSSQNVQTQESSSPQSQKFLPA, and LQNNITSPDPKSYAERKLDSDVYPSSKQE. A compositionally biased stretch (low complexity) spans 417 to 440; sequence LSSVSQSQSYSSGHSQGLSPVSQT. A phosphoserine mark is found at Ser-586, Ser-615, and Ser-886. Thr-949 bears the Phosphothreonine mark. The disordered stretch occupies residues 964–1033; that stretch reads GPSHEVQEQS…EFTLGGDDSG (70 aa). Residues 971–985 are compositionally biased toward polar residues; sequence EQSSGPFKKQSATNL. Phosphoserine is present on Ser-987. Polar residues predominate over residues 997–1024; sequence STLNNNRNQEFVSSSRSISGENATSESE. Glycyl lysine isopeptide (Lys-Gly) (interchain with G-Cter in SUMO2) cross-links involve residues Lys-1058 and Lys-1083. Disordered stretches follow at residues 1073 to 1132 and 1178 to 1217; these read KKRA…EKMR and RPGTQMVRTFCPPPLPKPSSTTPTPLVSETGGNSPSDKVD. The span at 1120–1132 shows a compositional bias: basic and acidic residues; sequence SCHDGYQHQEKMR. Phosphoserine occurs at positions 1211, 1230, 1231, and 1239. The segment at 1256 to 1286 is disordered; sequence TSDKKKKTEALQVATTSPTANTTGTATTSST. Over residues 1269–1286 the composition is skewed to low complexity; that stretch reads ATTSPTANTTGTATTSST. At Thr-1341 the chain carries Phosphothreonine. A Phosphoserine modification is found at Ser-1348. The tract at residues 1441 to 1532 is disordered; the sequence is VCSKKPRNKP…SSDDEEFEPP (92 aa). Over residues 1449–1478 the composition is skewed to polar residues; sequence KPSQTIRTVQAKPSSSSKTSDPLASKTTTT. A compositionally biased stretch (basic and acidic residues) spans 1492-1508; sequence VKAEPPPKKRKKWKEEF.

In terms of assembly, interacts with TET1.

It is found in the chromosome. Its function is as follows. Plays an essential role in the protection and maintenance of transcriptional and developmental programs. Protects many bivalent promoters and poised enhancers from hypermethylation, showing a marked preference for these regulatory elements over other types of promoters or enhancers. Mechanistically, cooperates with TET1 and binds to DNA in a common complex to inhibit the binding of DNMT3A/3B and therefore de novo methylation. In Homo sapiens (Human), this protein is Glutamine and serine-rich protein 1 (QSER1).